Here is a 147-residue protein sequence, read N- to C-terminus: Large ribosomal subunit protein uL13 (147 aa).

It belongs to the universal ribosomal protein uL13 family. Part of the 50S ribosomal subunit.

Its function is as follows. This protein is one of the early assembly proteins of the 50S ribosomal subunit, although it is not seen to bind rRNA by itself. It is important during the early stages of 50S assembly. This is Large ribosomal subunit protein uL13 from Frankia casuarinae (strain DSM 45818 / CECT 9043 / HFP020203 / CcI3).